Consider the following 428-residue polypeptide: Elongation factor 1-alpha (428 aa).

The tr-type G domain occupies 5–225; sequence KPILNVAFIG…DAFQPPEKPT (221 aa). Residues 14–21 form a G1 region; the sequence is GHVDAGKS. 14–21 is a binding site for GTP; that stretch reads GHVDAGKS. Residue Ser-21 coordinates Mg(2+). The G2 stretch occupies residues 70–74; it reads GVTID. The tract at residues 91–94 is G3; it reads DCPG. GTP is bound by residues 91-95 and 149-152; these read DCPGH and NKMD. The segment at 149-152 is G4; that stretch reads NKMD. The interval 189–191 is G5; that stretch reads ASL.

The protein belongs to the TRAFAC class translation factor GTPase superfamily. Classic translation factor GTPase family. EF-Tu/EF-1A subfamily.

It is found in the cytoplasm. It catalyses the reaction GTP + H2O = GDP + phosphate + H(+). Its function is as follows. GTP hydrolase that promotes the GTP-dependent binding of aminoacyl-tRNA to the A-site of ribosomes during protein biosynthesis. This chain is Elongation factor 1-alpha, found in Methanococcus maripaludis (strain C6 / ATCC BAA-1332).